The chain runs to 277 residues: UPF0276 protein PP_2398 (277 aa).

The protein belongs to the UPF0276 family.

The chain is UPF0276 protein PP_2398 from Pseudomonas putida (strain ATCC 47054 / DSM 6125 / CFBP 8728 / NCIMB 11950 / KT2440).